Consider the following 176-residue polypeptide: Probable inosine/xanthosine triphosphatase (176 aa).

A Mg(2+)-binding site is contributed by Asp36.

The protein belongs to the YjjX NTPase family. Homodimer. Requires Mg(2+) as cofactor. Mn(2+) serves as cofactor.

The catalysed reaction is XTP + H2O = XDP + phosphate + H(+). It catalyses the reaction ITP + H2O = IDP + phosphate + H(+). Phosphatase that hydrolyzes non-canonical purine nucleotides such as XTP and ITP to their respective diphosphate derivatives. Probably excludes non-canonical purines from DNA/RNA precursor pool, thus preventing their incorporation into DNA/RNA and avoiding chromosomal lesions. This Saccharolobus islandicus (strain M.14.25 / Kamchatka #1) (Sulfolobus islandicus) protein is Probable inosine/xanthosine triphosphatase.